A 521-amino-acid chain; its full sequence is Importin subunit alpha-3 (521 aa).

At Ala-2 the chain carries N-acetylalanine. One can recognise an IBB domain in the interval 2-58 (ADNEKLDNQRLKNFKNKGRDLETMRRQRNEVVVELRKNKRDEHLLKRRNVPQEDICE). Residues 43 to 52 (EHLLKRRNVP) carry the Nuclear localization signal motif. A Phosphoserine modification is found at Ser-60. One copy of the ARM 1; truncated repeat lies at 66 to 106 (YRVQNTSLEAIVQNASSDNQGIQLSAVQAARKLLSSDRNPP). ARM repeat units follow at residues 107–149 (IDDL…TSEQ), 150–194 (TQAV…CRDY), 195–233 (VISL…HKDP), 234–278 (PPPM…EQIQ), 279–318 (MVID…TDEQ), 319–360 (TQVV…NQQQ), 361–400 (VQAV…ISGR), and 401–443 (KDQV…KMAE). Positions 137 to 229 (WALTNIASGT…VTWVMVNLCR (93 aa)) are NLS binding site (major). Positions 306 to 394 (RAVGNIVTGT…QKEAAWAISN (89 aa)) are NLS binding site (minor). The stretch at 447–485 (ETIANLIEECGGLEKIEQLQNHENEDIYKLAYEIIDQFF) is one ARM 10; atypical repeat.

It belongs to the importin alpha family. As to quaternary structure, forms a complex with importin subunit beta-1 (KPNB1). Interacts with SNAI1. Interacts with TALDO1 isoform 1. Interacts with CYB1. Detected more or less in all tissues examined (Ehrlich ascites tumor cells, testis, kidney, spleen, liver, heart, lung, thymus, skeletal muscle, cerebellum and brain (without cerebellum)). Multiple-sized transcripts were highly expressed, especially in testis.

It localises to the cytoplasm. It is found in the nucleus. Functionally, functions in nuclear protein import as an adapter protein for nuclear receptor KPNB1. Binds specifically and directly to substrates containing either a simple or bipartite NLS motif. Docking of the importin/substrate complex to the nuclear pore complex (NPC) is mediated by KPNB1 through binding to nucleoporin FxFG repeats and the complex is subsequently translocated through the pore by an energy requiring, Ran-dependent mechanism. At the nucleoplasmic side of the NPC, Ran binds to importin-beta and the three components separate and importin-alpha and -beta are re-exported from the nucleus to the cytoplasm where GTP hydrolysis releases Ran from importin. The directionality of nuclear import is thought to be conferred by an asymmetric distribution of the GTP- and GDP-bound forms of Ran between the cytoplasm and nucleus. Mediates nuclear import of AARS1, MRTFA and RANBP3. In Mus musculus (Mouse), this protein is Importin subunit alpha-3 (Kpna4).